The chain runs to 232 residues: Large ribosomal subunit protein uL1 (232 aa).

Belongs to the universal ribosomal protein uL1 family. In terms of assembly, part of the 50S ribosomal subunit.

In terms of biological role, binds directly to 23S rRNA. The L1 stalk is quite mobile in the ribosome, and is involved in E site tRNA release. Protein L1 is also a translational repressor protein, it controls the translation of the L11 operon by binding to its mRNA. This Ruegeria pomeroyi (strain ATCC 700808 / DSM 15171 / DSS-3) (Silicibacter pomeroyi) protein is Large ribosomal subunit protein uL1.